The sequence spans 804 residues: Phenylalanine--tRNA ligase beta subunit (804 aa).

In terms of domain architecture, tRNA-binding spans 38-148 (RSYLKGFVIA…EDVPIGASFA (111 aa)). In terms of domain architecture, B5 spans 401–476 (PEIRQITFPL…RIYGLDKIKP (76 aa)). Mg(2+) contacts are provided by D454, D460, E463, and E464. Residues 710 to 803 (SSLQMVRRDF…VTRMTGASLR (94 aa)) enclose the FDX-ACB domain.

The protein belongs to the phenylalanyl-tRNA synthetase beta subunit family. Type 1 subfamily. As to quaternary structure, tetramer of two alpha and two beta subunits. Mg(2+) is required as a cofactor.

It localises to the cytoplasm. The catalysed reaction is tRNA(Phe) + L-phenylalanine + ATP = L-phenylalanyl-tRNA(Phe) + AMP + diphosphate + H(+). The sequence is that of Phenylalanine--tRNA ligase beta subunit from Bartonella henselae (strain ATCC 49882 / DSM 28221 / CCUG 30454 / Houston 1) (Rochalimaea henselae).